A 92-amino-acid chain; its full sequence is Secreted RxLR effector protein RXLR-C02 (92 aa).

Residues 1 to 21 (MQFHLLVMTTIAASFAATGSA) form the signal peptide. A RxLR motif is present at residues 48-51 (RALR). Residues 54-75 (ENRGLIGDDSDSSISDSDSEAK) form a disordered region.

This sequence belongs to the RxLR effector family.

The protein localises to the secreted. It localises to the host cytoplasm. The protein resides in the host nucleus. Functionally, secreted effector that suppresses pattern-triggered immunity (PTI) in plant host. The sequence is that of Secreted RxLR effector protein RXLR-C02 from Plasmopara halstedii (Downy mildew of sunflower).